Consider the following 195-residue polypeptide: Small ribosomal subunit protein uS4 (195 aa).

One can recognise an S4 RNA-binding domain in the interval 109 to 183; that stretch reads RRLQTQVFKL…VKRKNLKKNQ (75 aa). The segment at 165-195 is disordered; the sequence is PFGGGRPGRVKRKNLKKNQGGGGGAAEEEED.

Belongs to the universal ribosomal protein uS4 family. As to quaternary structure, component of the small ribosomal subunit. Identified in a IGF2BP1-dependent mRNP granule complex containing untranslated mRNAs. Part of the small subunit (SSU) processome, composed of more than 70 proteins and the RNA chaperone small nucleolar RNA (snoRNA) U3.

The protein localises to the cytoplasm. The protein resides in the nucleus. Its subcellular location is the nucleolus. In terms of biological role, component of the small ribosomal subunit. The ribosome is a large ribonucleoprotein complex responsible for the synthesis of proteins in the cell. Part of the small subunit (SSU) processome, first precursor of the small eukaryotic ribosomal subunit. During the assembly of the SSU processome in the nucleolus, many ribosome biogenesis factors, an RNA chaperone and ribosomal proteins associate with the nascent pre-rRNA and work in concert to generate RNA folding, modifications, rearrangements and cleavage as well as targeted degradation of pre-ribosomal RNA by the RNA exosome. This is Small ribosomal subunit protein uS4 from Drosophila melanogaster (Fruit fly).